A 241-amino-acid chain; its full sequence is Accessory protein p30II (241 aa).

Short sequence motifs (nuclear localization signal) lie at residues 73-78 (RRCRSR) and 91-98 (GPRRSRPR). The interval 86-153 (AFPPGGPRRS…HRNSPTDTKL (68 aa)) is disordered. Residues 107–138 (PSSTVSSSSLSFNSSSKDNSPSTNSSTSRSSG) show a composition bias toward low complexity. Residues 175-184 (LRVWRLCTRR) carry the Mitochondrial targeting signal motif.

The protein belongs to the HTLV-1 accessory protein p30II family. As to quaternary structure, p30II binds to the KIX domains of CREBBP and EP300.

The protein resides in the host nucleus. It is found in the host nucleolus. Its subcellular location is the host mitochondrion inner membrane. In terms of biological role, p30II is a multifunctional regulator that sequesters EP300/CREBBP and down-regulates CREB-responsive element (CRE) and Tax-responsive element (TRE) mediated transcription. Specifically binds and represses tax/rex mRNA nuclear export. Since Tax and Rex are positive regulators of viral gene expression, their inhibition by p30II reduces virion production, and allows the virus to escape the host immune surveillance and persist latently in an immune-competent host. Its function is as follows. p13II increases mitochondrial permeability to monovalent cations, producing a rapid, membrane potential-dependent influx of potassium. This could involve a channel-forming activity. Interferes with cell proliferation and transformation and promotes apoptosis induced by ceramide and Fas ligand, probably using the Ras signaling. The protein is Accessory protein p30II of Human T-cell leukemia virus 1 (isolate Caribbea HS-35 subtype A) (HTLV-1).